The sequence spans 115 residues: Macrophage migration inhibitory factor (115 aa).

Residue Pro-2 is the Proton acceptor; via imino nitrogen of the active site. Residues Lys-33 and Ile-65 each contribute to the substrate site. The residue at position 78 (Lys-78) is an N6-acetyllysine; alternate. N6-succinyllysine; alternate is present on Lys-78. Asn-98 is a binding site for substrate.

Belongs to the MIF family. As to quaternary structure, homotrimer. Interacts with CD74 and CXCR2 extracellular domain and COPS5. Interacts with the USO1 and BNIPL.

The protein resides in the secreted. It is found in the cytoplasm. It catalyses the reaction 3-phenylpyruvate = enol-phenylpyruvate. It carries out the reaction L-dopachrome = 5,6-dihydroxyindole-2-carboxylate. Its function is as follows. Pro-inflammatory cytokine involved in the innate immune response to bacterial pathogens. The expression of MIF at sites of inflammation suggests a role as mediator in regulating the function of macrophages in host defense. Counteracts the anti-inflammatory activity of glucocorticoids. Has phenylpyruvate tautomerase and dopachrome tautomerase activity (in vitro), but the physiological substrate is not known. It is not clear whether the tautomerase activity has any physiological relevance, and whether it is important for cytokine activity. The sequence is that of Macrophage migration inhibitory factor from Mus musculus (Mouse).